Consider the following 71-residue polypeptide: Small ribosomal subunit protein eS31 (71 aa).

Residues Cys-35, Cys-38, Cys-53, and Cys-56 each coordinate Zn(2+). Residues Cys-35–Cys-56 form a C4-type zinc finger.

This sequence belongs to the eukaryotic ribosomal protein eS31 family. As to quaternary structure, part of the 30S ribosomal subunit. Zn(2+) serves as cofactor.

The sequence is that of Small ribosomal subunit protein eS31 from Methanococcus vannielii (strain ATCC 35089 / DSM 1224 / JCM 13029 / OCM 148 / SB).